A 192-amino-acid chain; its full sequence is Elongation factor P (192 aa).

Lysine 37 bears the N6-(3,6-diaminohexanoyl)-5-hydroxylysine mark.

This sequence belongs to the elongation factor P family. May be beta-lysylated on the epsilon-amino group of Lys-37 by the combined action of EpmA and EpmB, and then hydroxylated on the C5 position of the same residue by EpmC (if this protein is present). Lysylation is critical for the stimulatory effect of EF-P on peptide-bond formation. The lysylation moiety may extend toward the peptidyltransferase center and stabilize the terminal 3-CCA end of the tRNA. Hydroxylation of the C5 position on Lys-37 may allow additional potential stabilizing hydrogen-bond interactions with the P-tRNA.

Its subcellular location is the cytoplasm. It functions in the pathway protein biosynthesis; polypeptide chain elongation. Involved in peptide bond synthesis. Alleviates ribosome stalling that occurs when 3 or more consecutive Pro residues or the sequence PPG is present in a protein, possibly by augmenting the peptidyl transferase activity of the ribosome. Modification of Lys-37 is required for alleviation. This Acinetobacter baylyi (strain ATCC 33305 / BD413 / ADP1) protein is Elongation factor P.